A 157-amino-acid chain; its full sequence is Ribonuclease H (157 aa).

The region spanning 4 to 146 is the RNase H type-1 domain; the sequence is KRTEITIYTD…CDKLAVKASQ (143 aa). Positions 13, 51, 73, and 138 each coordinate Mg(2+).

Belongs to the RNase H family. Monomer. Mg(2+) serves as cofactor.

It is found in the cytoplasm. It catalyses the reaction Endonucleolytic cleavage to 5'-phosphomonoester.. Endonuclease that specifically degrades the RNA of RNA-DNA hybrids. In Trichodesmium erythraeum (strain IMS101), this protein is Ribonuclease H.